Here is a 146-residue protein sequence, read N- to C-terminus: uncharacterized protein (146 aa).

One can recognise an N-acetyltransferase domain in the interval 7–146; sequence LQINYKTDEL…EGHDILIWNP (140 aa).

This is an uncharacterized protein from Staphylococcus epidermidis (strain ATCC 35984 / DSM 28319 / BCRC 17069 / CCUG 31568 / BM 3577 / RP62A).